Consider the following 68-residue polypeptide: UPF0253 protein VF_0662 (68 aa).

It belongs to the UPF0253 family.

This chain is UPF0253 protein VF_0662, found in Aliivibrio fischeri (strain ATCC 700601 / ES114) (Vibrio fischeri).